Consider the following 526-residue polypeptide: Na(+)/H(+) antiporter NhaB (526 aa).

12 helical membrane-spanning segments follow: residues 25–45 (ILLF…IAGW), 52–72 (IFTL…LLAI), 89–109 (LVAN…IYFM), 130–164 (LSLA…FYAI), 204–224 (LMMH…VGEP), 242–262 (IRMS…CVLV), 307–327 (IALW…LIGL), 350–370 (QEAL…AVII), 391–411 (LALF…VFVG), 448–468 (VATP…LAPL), 479–499 (MALP…EMLL), and 505–525 (WFYQ…LPVL).

This sequence belongs to the NhaB Na(+)/H(+) (TC 2.A.34) antiporter family.

The protein localises to the cell inner membrane. It catalyses the reaction 2 Na(+)(in) + 3 H(+)(out) = 2 Na(+)(out) + 3 H(+)(in). In terms of biological role, na(+)/H(+) antiporter that extrudes sodium in exchange for external protons. The protein is Na(+)/H(+) antiporter NhaB of Aeromonas hydrophila subsp. hydrophila (strain ATCC 7966 / DSM 30187 / BCRC 13018 / CCUG 14551 / JCM 1027 / KCTC 2358 / NCIMB 9240 / NCTC 8049).